The sequence spans 186 residues: Zein-alpha PZ19.1 (186 aa).

Residues 1–21 (MAAKIFCLIMLLGLSASAATA) form the signal peptide.

The protein belongs to the zein family.

Its function is as follows. Zeins are major seed storage proteins. The polypeptide is Zein-alpha PZ19.1 (Zea mays (Maize)).